A 249-amino-acid chain; its full sequence is tRNA (guanine-N(1)-)-methyltransferase (249 aa).

S-adenosyl-L-methionine-binding positions include Gly121 and 141–146; that span reads LGDFVL.

This sequence belongs to the RNA methyltransferase TrmD family. Homodimer.

It is found in the cytoplasm. The catalysed reaction is guanosine(37) in tRNA + S-adenosyl-L-methionine = N(1)-methylguanosine(37) in tRNA + S-adenosyl-L-homocysteine + H(+). In terms of biological role, specifically methylates guanosine-37 in various tRNAs. This Cereibacter sphaeroides (strain ATCC 17023 / DSM 158 / JCM 6121 / CCUG 31486 / LMG 2827 / NBRC 12203 / NCIMB 8253 / ATH 2.4.1.) (Rhodobacter sphaeroides) protein is tRNA (guanine-N(1)-)-methyltransferase.